The primary structure comprises 83 residues: Kappa-theraphotoxin-Cg2b (83 aa).

Positions 1-21 (MKGSAFAIILGLVVLCACSFA) are cleaved as a signal peptide. Positions 22 to 53 (EDEQDQFASPNELLRSMFLESRHELIPEVEGR) are excised as a propeptide. 3 disulfide bridges follow: cysteine 55–cysteine 69, cysteine 62–cysteine 74, and cysteine 68–cysteine 78.

The protein belongs to the neurotoxin 30 (phrixotoxin) family. In terms of tissue distribution, expressed by the venom gland.

The protein localises to the secreted. Functionally, probable ion channel inhibitor. The chain is Kappa-theraphotoxin-Cg2b from Chilobrachys guangxiensis (Chinese earth tiger tarantula).